Reading from the N-terminus, the 207-residue chain is Proteasome subunit beta (207 aa).

The propeptide at 1-7 (MVEAFKG) is removed in mature form; by autocatalysis. Thr8 (nucleophile) is an active-site residue.

Belongs to the peptidase T1B family. The 20S proteasome core is composed of 14 alpha and 14 beta subunits that assemble into four stacked heptameric rings, resulting in a barrel-shaped structure. The two inner rings, each composed of seven catalytic beta subunits, are sandwiched by two outer rings, each composed of seven alpha subunits. The catalytic chamber with the active sites is on the inside of the barrel. Has a gated structure, the ends of the cylinder being occluded by the N-termini of the alpha-subunits. Is capped at one or both ends by the proteasome regulatory ATPase, PAN.

The protein localises to the cytoplasm. The catalysed reaction is Cleavage of peptide bonds with very broad specificity.. With respect to regulation, the formation of the proteasomal ATPase PAN-20S proteasome complex, via the docking of the C-termini of PAN into the intersubunit pockets in the alpha-rings, triggers opening of the gate for substrate entry. Interconversion between the open-gate and close-gate conformations leads to a dynamic regulation of the 20S proteasome proteolysis activity. In terms of biological role, component of the proteasome core, a large protease complex with broad specificity involved in protein degradation. This chain is Proteasome subunit beta, found in Methanothrix thermoacetophila (strain DSM 6194 / JCM 14653 / NBRC 101360 / PT) (Methanosaeta thermophila).